Here is a 152-residue protein sequence, read N- to C-terminus: Transcriptional regulator MraZ (152 aa).

2 consecutive SpoVT-AbrB domains span residues 5 to 52 and 81 to 124; these read ATLV…PLPE and ASEC…DEQT.

It belongs to the MraZ family. In terms of assembly, forms oligomers.

The protein resides in the cytoplasm. It localises to the nucleoid. Negatively regulates its own expression and that of the subsequent genes in the proximal part of the division and cell wall (dcw) gene cluster. Acts by binding directly to DNA. May also regulate the expression of genes outside the dcw cluster. This chain is Transcriptional regulator MraZ, found in Pectobacterium atrosepticum (strain SCRI 1043 / ATCC BAA-672) (Erwinia carotovora subsp. atroseptica).